Consider the following 166-residue polypeptide: Anaerobic nitrite reductase NSHB1 (166 aa).

Residues 13-163 form the Globin domain; sequence SFSEEQEALV…LVAAIKQEMK (151 aa). Residues 46 to 50 carry the Homodimerization motif; it reads EVAPS. 6 residues coordinate heme b: Ser-56, Lys-70, His-74, Arg-104, Thr-108, and His-109. Positions 116–128 match the Homodimerization motif; that stretch reads DAHFEVVKFALLD.

The protein belongs to the plant globin family. As to quaternary structure, homodimer. Heme b is required as a cofactor. As to expression, expressed in coleoptiles, embryos, leaves, seminal roots and roots.

Its subcellular location is the cytoplasm. The protein resides in the nucleus. It catalyses the reaction Fe(III)-heme b-[protein] + nitric oxide + H2O = Fe(II)-heme b-[protein] + nitrite + 2 H(+). Slowly reduced by ascorbic acid (AA); this reaction may become a source of nitric oxide (NO) during hypoxia. Its function is as follows. Phytoglobin that reduces nitrite to nitric oxide under anoxic conditions (e.g. during flooding or in waterlogged soil). May not function as an oxygen storage or transport protein. Has an unusually high affinity for O(2) through a hexacoordinate heme iron because of a very low dissociation constant. The sequence is that of Anaerobic nitrite reductase NSHB1 from Oryza sativa subsp. japonica (Rice).